The following is a 179-amino-acid chain: Bifunctional protein PyrR (179 aa).

The short motif at 100 to 112 (VILVDDVLFTGRT) is the PRPP-binding element.

This sequence belongs to the purine/pyrimidine phosphoribosyltransferase family. PyrR subfamily.

It catalyses the reaction UMP + diphosphate = 5-phospho-alpha-D-ribose 1-diphosphate + uracil. Functionally, regulates the transcription of the pyrimidine nucleotide (pyr) operon in response to exogenous pyrimidines. In terms of biological role, also displays a weak uracil phosphoribosyltransferase activity which is not physiologically significant. The protein is Bifunctional protein PyrR of Actinobacillus succinogenes (strain ATCC 55618 / DSM 22257 / CCUG 43843 / 130Z).